Here is a 148-residue protein sequence, read N- to C-terminus: Cytochrome c oxidase subunit 4, mitochondrial (148 aa).

The transit peptide at 1-24 (MFALRSIRSATKAFQTTSIVSQRG) directs the protein to the mitochondrion.

Slime mold cytochrome c oxidase consists of at least seven different polypeptides species, subunits I, II, III, IV, V, VI, and VIIe/s in order of MW.

The protein resides in the mitochondrion inner membrane. It catalyses the reaction 4 Fe(II)-[cytochrome c] + O2 + 8 H(+)(in) = 4 Fe(III)-[cytochrome c] + 2 H2O + 4 H(+)(out). This protein is one of the nuclear-coded polypeptide chains of cytochrome c oxidase, the terminal oxidase in mitochondrial electron transport. The chain is Cytochrome c oxidase subunit 4, mitochondrial (cxdA) from Dictyostelium discoideum (Social amoeba).